Here is a 385-residue protein sequence, read N- to C-terminus: 8-amino-7-oxononanoate synthase (385 aa).

Position 21 (Arg21) interacts with substrate. 108–109 (GF) provides a ligand contact to pyridoxal 5'-phosphate. His133 contacts substrate. 3 residues coordinate pyridoxal 5'-phosphate: Ser179, His207, and Thr233. Lys236 carries the post-translational modification N6-(pyridoxal phosphate)lysine. Thr352 is a substrate binding site.

Belongs to the class-II pyridoxal-phosphate-dependent aminotransferase family. BioF subfamily. As to quaternary structure, homodimer. The cofactor is pyridoxal 5'-phosphate.

The catalysed reaction is 6-carboxyhexanoyl-[ACP] + L-alanine + H(+) = (8S)-8-amino-7-oxononanoate + holo-[ACP] + CO2. Its pathway is cofactor biosynthesis; biotin biosynthesis. In terms of biological role, catalyzes the decarboxylative condensation of pimeloyl-[acyl-carrier protein] and L-alanine to produce 8-amino-7-oxononanoate (AON), [acyl-carrier protein], and carbon dioxide. In Salmonella paratyphi C (strain RKS4594), this protein is 8-amino-7-oxononanoate synthase.